The chain runs to 179 residues: Large ribosomal subunit protein uL16m (179 aa).

The protein belongs to the universal ribosomal protein uL16 family. As to quaternary structure, component of the mitochondrial ribosome large subunit.

It localises to the mitochondrion. This chain is Large ribosomal subunit protein uL16m (RPL16), found in Arabidopsis thaliana (Mouse-ear cress).